A 339-amino-acid polypeptide reads, in one-letter code: Phosphate acyltransferase (339 aa).

Belongs to the PlsX family. In terms of assembly, homodimer. Probably interacts with PlsY.

The protein localises to the cytoplasm. The catalysed reaction is a fatty acyl-[ACP] + phosphate = an acyl phosphate + holo-[ACP]. The protein operates within lipid metabolism; phospholipid metabolism. In terms of biological role, catalyzes the reversible formation of acyl-phosphate (acyl-PO(4)) from acyl-[acyl-carrier-protein] (acyl-ACP). This enzyme utilizes acyl-ACP as fatty acyl donor, but not acyl-CoA. The protein is Phosphate acyltransferase of Pasteurella multocida (strain Pm70).